Reading from the N-terminus, the 425-residue chain is Enolase (425 aa).

Q161 serves as a coordination point for (2R)-2-phosphoglycerate. E203 functions as the Proton donor in the catalytic mechanism. The Mg(2+) site is built by D240, E283, and D310. The (2R)-2-phosphoglycerate site is built by K335, R364, S365, and K386. Residue K335 is the Proton acceptor of the active site.

This sequence belongs to the enolase family. Component of the RNA degradosome, a multiprotein complex involved in RNA processing and mRNA degradation. Mg(2+) serves as cofactor.

It localises to the cytoplasm. The protein resides in the secreted. Its subcellular location is the cell surface. The enzyme catalyses (2R)-2-phosphoglycerate = phosphoenolpyruvate + H2O. It participates in carbohydrate degradation; glycolysis; pyruvate from D-glyceraldehyde 3-phosphate: step 4/5. In terms of biological role, catalyzes the reversible conversion of 2-phosphoglycerate (2-PG) into phosphoenolpyruvate (PEP). It is essential for the degradation of carbohydrates via glycolysis. The protein is Enolase of Ruthia magnifica subsp. Calyptogena magnifica.